The following is a 147-amino-acid chain: Arginine vasopressin-induced protein 1 (147 aa).

2 disordered regions span residues Met-1–Lys-24 and Leu-104–His-147. A compositionally biased stretch (polar residues) spans Ala-105–Tyr-119. The segment covering His-121–Arg-134 has biased composition (basic residues). Positions Gly-137–His-147 are enriched in polar residues.

May be involved in MAP kinase activation, epithelial sodium channel (ENaC) down-regulation and cell cycling. The protein is Arginine vasopressin-induced protein 1 (AVPI1) of Homo sapiens (Human).